A 534-amino-acid polypeptide reads, in one-letter code: Peptide chain release factor 3 (534 aa).

A tr-type G domain is found at 9 to 278; sequence ARRRTFAIIS…FFIEHAPPPQ (270 aa). GTP is bound by residues 18–25, 86–90, and 140–143; these read SHPDAGKT, DTPGH, and NKLD.

This sequence belongs to the TRAFAC class translation factor GTPase superfamily. Classic translation factor GTPase family. PrfC subfamily.

The protein resides in the cytoplasm. Functionally, increases the formation of ribosomal termination complexes and stimulates activities of RF-1 and RF-2. It binds guanine nucleotides and has strong preference for UGA stop codons. It may interact directly with the ribosome. The stimulation of RF-1 and RF-2 is significantly reduced by GTP and GDP, but not by GMP. The sequence is that of Peptide chain release factor 3 from Xanthomonas oryzae pv. oryzae (strain PXO99A).